Here is a 757-residue protein sequence, read N- to C-terminus: MSRLFLACLLAIFPVVSMKSPIFGPEEVTSVEGRSVSIKCYYPPTSVNRHTRKYWCRQGAQGRCTTLISSEGYVSDDYVGRANLTNFPESGTFVVDISHLTHKDSGRYKCGLGISSRGLNFDVSLEVSQDPAQASHAHVYTVDLGRTVTINCPFTRANSEKRKSLCKKTIQDCFQVVDSTGYVSNSYKDRAHISILGTNTLVFSVVINRVKLSDAGMYVCQAGDDAKADKINIDLQVLEPEPELVYGDLRSSVTFDCSLGPEVANVPKFLCQKKNGGACNVVINTLGKKAQDFQGRIVSVPKDNGVFSVHITSLRKEDAGRYVCGAQPEGEPQDGWPVQAWQLFVNEETAIPASPSVVKGVRGGSVTVSCPYNPKDANSAKYWCHWEEAQNGRCPRLVESRGLIKEQYEGRLALLTEPGNGTYTVILNQLTDQDTGFYWCVTDGDTRWISTVELKVVQGEPSLKVPKNVTAWLGEPLKLSCHFPCKFYSFEKYWCKWSNRGCSALPTQNDGPSQAFVSCDQNSQVVSLNLDTVTKEDEGWYWCGVKEGPRYGETAAVYVAVESRVKGSQGAKQVKAAPAGAAIQSRAGEIQNKALLDPSFFAKESVKDAAGGPGAPADPGRPTGYSGSSKALVSTLVPLALVLVAGVVAIGVVRARHRKNVDRISIRSYRTDISMSDFENSRDFEGRDNMGASPEAQETSLGGKDEFATTTEDTVESKEPKKAKRSSKEEADEAFTTFLLQAKNLASAATQNGPTEA.

A signal peptide spans 1 to 18; that stretch reads MSRLFLACLLAIFPVVSM. The Ig-like V-type 1; required for binding to polymeric IgA and IgM domain maps to 19-126; that stretch reads KSPIFGPEEV…RGLNFDVSLE (108 aa). The Extracellular portion of the chain corresponds to 19–632; it reads KSPIFGPEEV…TGYSGSSKAL (614 aa). 7 cysteine pairs are disulfide-bonded: Cys40-Cys110, Cys56-Cys64, Cys152-Cys220, Cys257-Cys324, Cys271-Cys279, Cys370-Cys440, and Cys384-Cys394. A glycan (N-linked (GlcNAc...) asparagine) is linked at Asn83. 4 Ig-like V-type domains span residues 145-237, 250-341, 353-457, and 461-560; these read GRTV…DLQV, RSSV…VQAW, ASPS…LKVV, and PSLK…VYVA. N-linked (GlcNAc...) asparagine glycosylation is found at Asn420 and Asn468. 3 disulfide bridges follow: Cys481–Cys543, Cys485–Cys519, and Cys495–Cys502. The interval 607 to 627 is disordered; it reads KDAAGGPGAPADPGRPTGYSG. The chain crosses the membrane as a helical span at residues 633-653; sequence VSTLVPLALVLVAGVVAIGVV. The Cytoplasmic portion of the chain corresponds to 654-757; sequence RARHRKNVDR…AATQNGPTEA (104 aa). Phosphoserine occurs at positions 665, 674, 681, and 727. The span at 679 to 688 shows a compositional bias: basic and acidic residues; the sequence is ENSRDFEGRD. Positions 679–730 are disordered; the sequence is ENSRDFEGRDNMGASPEAQETSLGGKDEFATTTEDTVESKEPKKAKRSSKEE.

Interacts (mainly via CDR1-like domain) with dimeric IgA. Interacts (mainly via CDR2-like domain) with pentameric IgM. In terms of assembly, either free or part of the secretory IgA (sIgA) complex that consists of two, four or five IgA monomers, and two additional non-Ig polypeptides, namely the JCHAIN and the secretory component (the proteolytic product of PIGR). Free secretory component interacts with bacterial antigens toxA of C.difficile and eae of E.coli. Post-translationally, in the absence of dimeric IgA, Ser-727 is phosphorylated which allows PIGR to function normally. In terms of processing, N-glycosylated. N-glycosylation is required for anchoring IgA molecules to mucus, but is not necessary for Ig binding. In terms of tissue distribution, found in mammary gland, jejunum, lung, kidney and small intestine.

It localises to the cell membrane. The protein resides in the secreted. Mediates selective transcytosis of polymeric IgA and IgM across mucosal epithelial cells. Binds polymeric IgA and IgM at the basolateral surface of epithelial cells. The complex is then transported across the cell to be secreted at the apical surface. During this process, a cleavage occurs that separates the extracellular (known as the secretory component) from the transmembrane segment. In terms of biological role, through its N-linked glycans ensures anchoring of secretory IgA (sIgA) molecules to mucus lining the epithelial surface to neutralize extracellular pathogens. On its own (free form) may act as a non-specific microbial scavenger to prevent pathogen interaction with epithelial cells. The chain is Polymeric immunoglobulin receptor (PIGR) from Bos taurus (Bovine).